The sequence spans 407 residues: Arginine deiminase (407 aa).

Residue Cys397 is the Amidino-cysteine intermediate of the active site.

The protein belongs to the arginine deiminase family.

Its subcellular location is the cytoplasm. It catalyses the reaction L-arginine + H2O = L-citrulline + NH4(+). Its pathway is amino-acid degradation; L-arginine degradation via ADI pathway; carbamoyl phosphate from L-arginine: step 1/2. The sequence is that of Arginine deiminase from Escherichia coli O81 (strain ED1a).